Consider the following 375-residue polypeptide: 23S rRNA (uracil(747)-C(5))-methyltransferase RlmC (375 aa).

[4Fe-4S] cluster-binding residues include Cys-3, Cys-11, Cys-14, and Cys-87. Positions 212, 241, 262, and 307 each coordinate S-adenosyl-L-methionine. Cys-334 functions as the Nucleophile in the catalytic mechanism.

It belongs to the class I-like SAM-binding methyltransferase superfamily. RNA M5U methyltransferase family. RlmC subfamily.

The catalysed reaction is uridine(747) in 23S rRNA + S-adenosyl-L-methionine = 5-methyluridine(747) in 23S rRNA + S-adenosyl-L-homocysteine + H(+). Functionally, catalyzes the formation of 5-methyl-uridine at position 747 (m5U747) in 23S rRNA. This chain is 23S rRNA (uracil(747)-C(5))-methyltransferase RlmC, found in Shigella dysenteriae serotype 1 (strain Sd197).